A 557-amino-acid chain; its full sequence is Dihydroxy-acid dehydratase (557 aa).

D78 is a binding site for Mg(2+). C119 serves as a coordination point for [2Fe-2S] cluster. Mg(2+) contacts are provided by D120 and K121. K121 carries the N6-carboxylysine modification. Position 192 (C192) interacts with [2Fe-2S] cluster. E442 serves as a coordination point for Mg(2+). Catalysis depends on S468, which acts as the Proton acceptor.

The protein belongs to the IlvD/Edd family. In terms of assembly, homodimer. [2Fe-2S] cluster is required as a cofactor. It depends on Mg(2+) as a cofactor.

The enzyme catalyses (2R)-2,3-dihydroxy-3-methylbutanoate = 3-methyl-2-oxobutanoate + H2O. It catalyses the reaction (2R,3R)-2,3-dihydroxy-3-methylpentanoate = (S)-3-methyl-2-oxopentanoate + H2O. Its pathway is amino-acid biosynthesis; L-isoleucine biosynthesis; L-isoleucine from 2-oxobutanoate: step 3/4. It participates in amino-acid biosynthesis; L-valine biosynthesis; L-valine from pyruvate: step 3/4. Its function is as follows. Functions in the biosynthesis of branched-chain amino acids. Catalyzes the dehydration of (2R,3R)-2,3-dihydroxy-3-methylpentanoate (2,3-dihydroxy-3-methylvalerate) into 2-oxo-3-methylpentanoate (2-oxo-3-methylvalerate) and of (2R)-2,3-dihydroxy-3-methylbutanoate (2,3-dihydroxyisovalerate) into 2-oxo-3-methylbutanoate (2-oxoisovalerate), the penultimate precursor to L-isoleucine and L-valine, respectively. This Bacillus cereus (strain G9842) protein is Dihydroxy-acid dehydratase.